The chain runs to 509 residues: Photosystem II CP47 reaction center protein (509 aa).

6 helical membrane passes run 21-36, 101-115, 140-156, 203-218, 237-252, and 457-472; these read AVHLMHTALVAGWAGS, IGLSGLLFLAAIWHW, GIHLFLSGLLCFGFGAF, IAAGIVGILAGLFHLS, VLSSSISAVFFAAFIV, and SFALIFFFGHLWHGGR.

It belongs to the PsbB/PsbC family. PsbB subfamily. As to quaternary structure, PSII is composed of 1 copy each of membrane proteins PsbA, PsbB, PsbC, PsbD, PsbE, PsbF, PsbH, PsbI, PsbJ, PsbK, PsbL, PsbM, PsbT, PsbX, PsbY, PsbZ, Psb30/Ycf12, at least 3 peripheral proteins of the oxygen-evolving complex and a large number of cofactors. It forms dimeric complexes. It depends on Binds multiple chlorophylls. PSII binds additional chlorophylls, carotenoids and specific lipids. as a cofactor.

The protein resides in the plastid. It localises to the cyanelle thylakoid membrane. In terms of biological role, one of the components of the core complex of photosystem II (PSII). It binds chlorophyll and helps catalyze the primary light-induced photochemical processes of PSII. PSII is a light-driven water:plastoquinone oxidoreductase, using light energy to abstract electrons from H(2)O, generating O(2) and a proton gradient subsequently used for ATP formation. This is Photosystem II CP47 reaction center protein from Cyanophora paradoxa.